Consider the following 137-residue polypeptide: Gonadotropin subunit beta-1 (137 aa).

An N-terminal signal peptide occupies residues 1–24 (MYCTHLRMLQLVVMATLWVTPVRA). Cystine bridges form between C32–C78, C46–C93, C55–C108, C59–C110, and C113–C120. N36 carries N-linked (GlcNAc...) asparagine glycosylation.

The protein belongs to the glycoprotein hormones subunit beta family. In terms of assembly, heterodimer of an alpha and a beta chain.

It is found in the secreted. In terms of biological role, involved in gametogenesis and steroidogenesis. This Coregonus autumnalis (Arctic cisco) protein is Gonadotropin subunit beta-1 (cgba).